The following is a 225-amino-acid chain: Glutathione S-transferase-like protein tpcF (225 aa).

Residues 4-85 (IQPITVYGKG…YLVSHYDPDH (82 aa)) form the GST N-terminal domain. The GST C-terminal domain occupies 92–225 (GSNLAALATQ…KGMADIFPST (134 aa)).

Belongs to the GST superfamily. Specifically expressed in conidia.

Its pathway is secondary metabolite biosynthesis. Its function is as follows. Glutathione S-transferase-like protein; part of the gene cluster that mediates the biosynthesis of trypacidin, a mycotoxin with antiprotozoal activity and that plays a role in the infection process. The pathway begins with the synthesis of atrochrysone thioester by the polyketide synthase (PKS) tpcC. The atrochrysone carboxyl ACP thioesterase tpcB then breaks the thioester bond and releases the atrochrysone carboxylic acid from tpcC. The decarboxylase tpcK converts atrochrysone carboxylic acid to atrochrysone which is further reduced into emodin anthrone. The next step is performed by the emodin anthrone oxygenase tpcL that catalyzes the oxidation of emodinanthrone to emodin. Emodin O-methyltransferase encoded by tpcA catalyzes methylation of the 8-hydroxy group of emodin to form questin. Ring cleavage of questin by questin oxidase tpcI leads to desmethylsulochrin via several intermediates including questin epoxide. Another methylation step catalyzed by tpcM leads to the formation of sulochrin which is further converted to monomethylsulfochrin by tpcH. Finally, the tpcJ catalyzes the conversion of monomethylsulfochrin to trypacidin. Trypacidin is toxic for human pulmonary and bronchial epithelial cells by initiating the intracellular formation of nitric oxide (NO) and hydrogen peroxide (H(2)O(2)), thus triggering host necrotic cell death. The trypacidin pathway is also able to produce endocrocin via a distinct route from the endocrocin Enc pathway. This is Glutathione S-transferase-like protein tpcF from Aspergillus fumigatus (strain ATCC MYA-4609 / CBS 101355 / FGSC A1100 / Af293) (Neosartorya fumigata).